The following is a 529-amino-acid chain: Bifunctional purine biosynthesis protein PurH (529 aa).

The MGS-like domain occupies 1–148 (MQQRRPVRRA…KNHKDVAIVV (148 aa)). Lysine 287 carries the N6-acetyllysine modification.

It belongs to the PurH family.

It carries out the reaction (6R)-10-formyltetrahydrofolate + 5-amino-1-(5-phospho-beta-D-ribosyl)imidazole-4-carboxamide = 5-formamido-1-(5-phospho-D-ribosyl)imidazole-4-carboxamide + (6S)-5,6,7,8-tetrahydrofolate. The catalysed reaction is IMP + H2O = 5-formamido-1-(5-phospho-D-ribosyl)imidazole-4-carboxamide. Its pathway is purine metabolism; IMP biosynthesis via de novo pathway; 5-formamido-1-(5-phospho-D-ribosyl)imidazole-4-carboxamide from 5-amino-1-(5-phospho-D-ribosyl)imidazole-4-carboxamide (10-formyl THF route): step 1/1. It participates in purine metabolism; IMP biosynthesis via de novo pathway; IMP from 5-formamido-1-(5-phospho-D-ribosyl)imidazole-4-carboxamide: step 1/1. This chain is Bifunctional purine biosynthesis protein PurH, found in Escherichia coli O45:K1 (strain S88 / ExPEC).